The following is a 1192-amino-acid chain: Chromosome partition protein Smc (1192 aa).

31-38 (PNGSGKSN) contacts ATP. Coiled coils occupy residues 164–197 (AGISRFKAKKVEAERRLERVQTNLTRLGDIVDEV), 234–292 (LTLS…RSEL), 333–369 (SAIADLRKTIAALEVAEAELADVQQKKESIAAKRDVE), and 396–464 (EHEA…DAKV). The SMC hinge domain maps to 522 to 636 (KDLVGIVADC…LVDTLATAIG (115 aa)). Coiled coils occupy residues 676–736 (RSEL…AKLH), 772–902 (ELAV…EREA), and 986–1030 (GSVN…INAD).

This sequence belongs to the SMC family. In terms of assembly, homodimer.

It is found in the cytoplasm. Functionally, required for chromosome condensation and partitioning. This chain is Chromosome partition protein Smc, found in Rhodopirellula baltica (strain DSM 10527 / NCIMB 13988 / SH1).